A 408-amino-acid polypeptide reads, in one-letter code: Multidrug resistance protein MdtG (408 aa).

Transmembrane regions (helical) follow at residues 16–36 (LIVAWLGCFLTGAAFSLVMPF), 58–78 (IVFSITFLFSAIASPFWGGLA), 92–112 (LGMGIVMVLMGLAQNIWQFLI), 115–135 (ALLGLLGGFVPNANALIATQV), 146–166 (TLSTGGVSGALLGPMAGGLLA), 173–193 (PVFFITASVLILCFFVTLFCI), 224–244 (LFVTTLIIQVATGSIAPILTL), 256–276 (VAFISGMIASVPGVAALLSAP), 290–310 (ILITALIFSVLLLIPMSYVQT), 319–339 (FLLGAADGALLPAVQTLLVYN), and 378–398 (AVFLVTAGVVLFNAVYSWNSL).

The protein belongs to the major facilitator superfamily. DHA1 family. MdtG (TC 2.A.1.2.20) subfamily.

The protein localises to the cell inner membrane. In terms of biological role, confers resistance to fosfomycin and deoxycholate. This chain is Multidrug resistance protein MdtG, found in Escherichia coli O127:H6 (strain E2348/69 / EPEC).